The following is a 344-amino-acid chain: Dihydroorotase (344 aa).

2 residues coordinate Zn(2+): histidine 13 and histidine 15. Residues 15–17 (HLR) and asparagine 41 each bind substrate. Residues lysine 99, histidine 136, and histidine 174 each coordinate Zn(2+). Lysine 99 is modified (N6-carboxylysine). Position 136 (histidine 136) interacts with substrate. Leucine 219 contributes to the substrate binding site. Aspartate 247 contributes to the Zn(2+) binding site. The active site involves aspartate 247. Residues histidine 251 and alanine 263 each coordinate substrate.

This sequence belongs to the metallo-dependent hydrolases superfamily. DHOase family. Class II DHOase subfamily. As to quaternary structure, homodimer. Zn(2+) is required as a cofactor.

It catalyses the reaction (S)-dihydroorotate + H2O = N-carbamoyl-L-aspartate + H(+). The protein operates within pyrimidine metabolism; UMP biosynthesis via de novo pathway; (S)-dihydroorotate from bicarbonate: step 3/3. Catalyzes the reversible cyclization of carbamoyl aspartate to dihydroorotate. In Acinetobacter baylyi (strain ATCC 33305 / BD413 / ADP1), this protein is Dihydroorotase.